Here is a 472-residue protein sequence, read N- to C-terminus: Putative cytochrome P450 135B1 (472 aa).

A heme-binding site is contributed by Cys-388. The disordered stretch occupies residues 442–472; that stretch reads RDVSATSQATAQGAGCPAARGGGPSRAVGSQ. A compositionally biased stretch (low complexity) spans 452-472; the sequence is AQGAGCPAARGGGPSRAVGSQ.

Belongs to the cytochrome P450 family. The cofactor is heme.

The chain is Putative cytochrome P450 135B1 (cyp135B1) from Mycobacterium bovis (strain ATCC BAA-935 / AF2122/97).